A 360-amino-acid chain; its full sequence is Phospho-N-acetylmuramoyl-pentapeptide-transferase (360 aa).

Transmembrane regions (helical) follow at residues 21–41 (YITFRAIMALLTAMGIGLWIG), 73–93 (TMGGIMILIAIGVSTLLWADL), 98–118 (VWFVLFVLFGYGAVGFVDDYW), 132–152 (WKYFWLSVIALIAVFGIYAVG), 168–188 (FMPQLGIFFIILSYFVIVGTS), 199–219 (GLAIVPTIMVASAFALIAWAT), 236–256 (AGELVILCTAIVGAGLGFLWY), 263–283 (VFMGDVGSLSLGGALGTIAVL), 288–308 (LLLVIMGGVFVVEALSVILQV), and 338–358 (VIVRFWIITLMLVLIGLVTLK).

Belongs to the glycosyltransferase 4 family. MraY subfamily. The cofactor is Mg(2+).

It localises to the cell inner membrane. It catalyses the reaction UDP-N-acetyl-alpha-D-muramoyl-L-alanyl-gamma-D-glutamyl-meso-2,6-diaminopimeloyl-D-alanyl-D-alanine + di-trans,octa-cis-undecaprenyl phosphate = di-trans,octa-cis-undecaprenyl diphospho-N-acetyl-alpha-D-muramoyl-L-alanyl-D-glutamyl-meso-2,6-diaminopimeloyl-D-alanyl-D-alanine + UMP. Its pathway is cell wall biogenesis; peptidoglycan biosynthesis. In terms of biological role, catalyzes the initial step of the lipid cycle reactions in the biosynthesis of the cell wall peptidoglycan: transfers peptidoglycan precursor phospho-MurNAc-pentapeptide from UDP-MurNAc-pentapeptide onto the lipid carrier undecaprenyl phosphate, yielding undecaprenyl-pyrophosphoryl-MurNAc-pentapeptide, known as lipid I. The protein is Phospho-N-acetylmuramoyl-pentapeptide-transferase of Actinobacillus pleuropneumoniae serotype 3 (strain JL03).